The chain runs to 216 residues: Elongation factor 1-beta (216 aa).

It belongs to the EF-1-beta/EF-1-delta family. As to quaternary structure, EF-1 is composed of 4 subunits: alpha, beta, delta, and gamma. Interacts with actin.

It is found in the cytoplasm. Functionally, EF-1-beta and EF-1-delta stimulate the exchange of GDP bound to EF-1-alpha to GTP. In Dictyostelium discoideum (Social amoeba), this protein is Elongation factor 1-beta (efa1B).